The sequence spans 450 residues: MTTRQPIYKSLYFQVIVAIVIGILIGHFYPDTGKALKPLGDGFIKLIKMVIAPIIFCTVVSGIAGMQSMKSVGKTGGYALLYFEIVSTIALLIGLIVVNVVQPGAGMNIDVSTLDASKIAAYVTAGQDQSIVGFILNVIPNTIVGAFANGDILQVLMFSVIFGFALHRLGAYGKPVLDFIDRFAHVMFNIINMIMKLAPLGAFGAMAFTIGAYGVSSLVQLGQLMICFYITCALFVVFVLGAIARAHGFSIFKLIRYIREELLIVLGTSSSESALPRMLIKMERLGAKKSVVGLVIPTGYSFNLDGTSIYLTMAAVFIAQATNTHMDITHQITLLLVLLLSSKGAAGVTGSGFIVLAATLSAVGHLPVAGLALILGIDRFMSEARALTNLVGNAVATVVVAKWVGELDTDKLQSELASGGSAILETRPEDDLGVAEGPTPGAAVNTTKTV.

The next 9 helical transmembrane spans lie at 10 to 30 (SLYF…HFYP), 46 to 66 (LIKM…IAGM), 78 to 98 (YALL…LIVV), 143 to 163 (IVGA…VIFG), 190 to 210 (IINM…AFTI), 224 to 244 (LMIC…GAIA), 291 to 311 (VVGL…SIYL), 332 to 352 (ITLL…TGSG), and 354 to 374 (IVLA…LALI). The tract at residues 428-450 (PEDDLGVAEGPTPGAAVNTTKTV) is disordered.

The protein belongs to the dicarboxylate/amino acid:cation symporter (DAACS) (TC 2.A.23) family.

Its subcellular location is the cell inner membrane. In terms of biological role, responsible for the transport of dicarboxylates such as succinate, fumarate, and malate from the periplasm across the membrane. The polypeptide is C4-dicarboxylate transport protein (Pseudomonas syringae pv. syringae (strain B728a)).